A 344-amino-acid chain; its full sequence is Tetraacyldisaccharide 4'-kinase (344 aa).

His65 to Thr72 is a binding site for ATP.

This sequence belongs to the LpxK family.

It catalyses the reaction a lipid A disaccharide + ATP = a lipid IVA + ADP + H(+). It participates in glycolipid biosynthesis; lipid IV(A) biosynthesis; lipid IV(A) from (3R)-3-hydroxytetradecanoyl-[acyl-carrier-protein] and UDP-N-acetyl-alpha-D-glucosamine: step 6/6. Its function is as follows. Transfers the gamma-phosphate of ATP to the 4'-position of a tetraacyldisaccharide 1-phosphate intermediate (termed DS-1-P) to form tetraacyldisaccharide 1,4'-bis-phosphate (lipid IVA). The chain is Tetraacyldisaccharide 4'-kinase from Neisseria meningitidis serogroup B (strain ATCC BAA-335 / MC58).